A 373-amino-acid chain; its full sequence is Flagellar P-ring protein 1 (373 aa).

The signal sequence occupies residues 1–25 (MKPINTFFSSFLLALTLGLPATSQA).

Belongs to the FlgI family. As to quaternary structure, the basal body constitutes a major portion of the flagellar organelle and consists of four rings (L,P,S, and M) mounted on a central rod.

The protein resides in the periplasm. It is found in the bacterial flagellum basal body. Assembles around the rod to form the L-ring and probably protects the motor/basal body from shearing forces during rotation. The sequence is that of Flagellar P-ring protein 1 from Vibrio parahaemolyticus serotype O3:K6 (strain RIMD 2210633).